The chain runs to 714 residues: Structure-specific endonuclease subunit SLX4 1 (714 aa).

2 stretches are compositionally biased toward basic and acidic residues: residues 1–14 (MSPE…EDNL) and 24–34 (IHEETLAEESH). Disordered regions lie at residues 1-116 (MSPE…QGSI) and 337-369 (DSSG…KTPQ). A compositionally biased stretch (low complexity) spans 36–46 (QSIQRSISRLS). Over residues 79 to 92 (KTKKRKLKVSKPRK) the composition is skewed to basic residues.

It belongs to the SLX4 family. Forms a heterodimer with SLX1. Post-translationally, phosphorylated in response to DNA damage.

The protein resides in the nucleus. Functionally, regulatory subunit of the SLX1-SLX4 structure-specific endonuclease that resolves DNA secondary structures generated during DNA repair and recombination. Has endonuclease activity towards branched DNA substrates, introducing single-strand cuts in duplex DNA close to junctions with ss-DNA. The sequence is that of Structure-specific endonuclease subunit SLX4 1 from Candida tropicalis (strain ATCC MYA-3404 / T1) (Yeast).